The chain runs to 66 residues: uncharacterized protein (66 aa).

2 consecutive transmembrane segments (helical) span residues 4–24 (ALFI…LLIF) and 38–58 (LLTP…ILVL).

Its subcellular location is the membrane. This is an uncharacterized protein from Saccharomyces cerevisiae (strain ATCC 204508 / S288c) (Baker's yeast).